Reading from the N-terminus, the 230-residue chain is Sugar fermentation stimulation protein homolog (230 aa).

Belongs to the SfsA family.

This chain is Sugar fermentation stimulation protein homolog, found in Pelobacter propionicus (strain DSM 2379 / NBRC 103807 / OttBd1).